Here is a 256-residue protein sequence, read N- to C-terminus: Thiazole synthase (256 aa).

Lysine 95 acts as the Schiff-base intermediate with DXP in catalysis. Residues glycine 156, 182–183 (AG), and 204–205 (NT) each bind 1-deoxy-D-xylulose 5-phosphate.

It belongs to the ThiG family. Homotetramer. Forms heterodimers with either ThiH or ThiS.

The protein localises to the cytoplasm. It catalyses the reaction [ThiS sulfur-carrier protein]-C-terminal-Gly-aminoethanethioate + 2-iminoacetate + 1-deoxy-D-xylulose 5-phosphate = [ThiS sulfur-carrier protein]-C-terminal Gly-Gly + 2-[(2R,5Z)-2-carboxy-4-methylthiazol-5(2H)-ylidene]ethyl phosphate + 2 H2O + H(+). Its pathway is cofactor biosynthesis; thiamine diphosphate biosynthesis. Functionally, catalyzes the rearrangement of 1-deoxy-D-xylulose 5-phosphate (DXP) to produce the thiazole phosphate moiety of thiamine. Sulfur is provided by the thiocarboxylate moiety of the carrier protein ThiS. In vitro, sulfur can be provided by H(2)S. This is Thiazole synthase from Escherichia coli O127:H6 (strain E2348/69 / EPEC).